Consider the following 203-residue polypeptide: Guanylate kinase (203 aa).

The region spanning 3-181 (GTLYIVAAPS…AVAEMCAIFT (179 aa)) is the Guanylate kinase-like domain. Position 10–17 (10–17 (APSGAGKS)) interacts with ATP.

The protein belongs to the guanylate kinase family.

The protein resides in the cytoplasm. The catalysed reaction is GMP + ATP = GDP + ADP. Functionally, essential for recycling GMP and indirectly, cGMP. The protein is Guanylate kinase of Xanthomonas euvesicatoria pv. vesicatoria (strain 85-10) (Xanthomonas campestris pv. vesicatoria).